The following is a 1098-amino-acid chain: Bifunctional helicase and thymine dioxygenase JBP2 (1098 aa).

Positions 1-540 are thymine dioxygenase; sequence MLNGLTRVST…PPLFVPTRLA (540 aa). Histidine 415, aspartate 417, and histidine 465 together coordinate Fe cation. Arginine 479 provides a ligand contact to 2-oxoglutarate. Positions 541–1098 are DNA Helicase; it reads SHLAPVQLAA…RYQESVRESE (558 aa). One can recognise a Helicase ATP-binding domain in the interval 555–730; the sequence is VERTEKQSGC…YRLVGWVNKG (176 aa). An ATP-binding site is contributed by 568–575; it reads MTMGLGKT. The DEAH box signature appears at 681 to 684; it reads DEGH. A Helicase C-terminal domain is found at 897-1057; it reads VLVDIVLRVQ…ALPDELEDCA (161 aa).

The protein in the C-terminal section; belongs to the SNF2/RAD54 helicase family. This sequence in the N-terminal section; belongs to the TET family. JBP2 subfamily. The cofactor is Fe(2+).

The protein localises to the nucleus. It carries out the reaction ATP + H2O = ADP + phosphate + H(+). It catalyses the reaction thymine + 2-oxoglutarate + O2 = 5-hydroxymethyluracil + succinate + CO2. Functionally, dioxygenase that catalyzes the first step of DNA base J (beta-d-glucosyl-HOMedU) biosynthesis by converting thymine to 5-hydroxymethyluracil (HOMedU). DNA base J is a hypermodified thymidine residue found in the genome of kinetoplastid parasites, which is localized primarily to repetitive DNA, namely the telomeres, and is implicated in the regulation of antigenic variation. Probably also acts as a DNA helicase. Recognizes and binds specific regions of the genome, hydrolyzes ATP and allows the DNA base J de novo synthesis. Involved in initial synthesis of DNA base J, JBP1 being able to act via the basal level of DNA base J and propagate further synthesis. In contrast to JBP1, it does not specifically bind DNA base J, however it binds chromatin. The chain is Bifunctional helicase and thymine dioxygenase JBP2 (JBP2) from Leishmania infantum.